Reading from the N-terminus, the 237-residue chain is UPF0688 protein C1orf174 homolog (237 aa).

The interval 1-187 (MRSRKLAGGV…LLDDDSNQPM (187 aa)) is disordered. A compositionally biased stretch (low complexity) spans 11–28 (RSSARLRARSCSAASASA). The span at 29–47 (QDTHVTTSAQTACQTPSSH) shows a compositional bias: polar residues. The segment covering 48 to 76 (KATDRRTSKKFKYDKGHIVKSELQKHRSD) has biased composition (basic and acidic residues). Residue S183 is modified to Phosphoserine.

This sequence belongs to the UPF0688 family.

It localises to the nucleus. In Bos taurus (Bovine), this protein is UPF0688 protein C1orf174 homolog.